The chain runs to 93 residues: CRISPR-associated endoribonuclease Cas2 (93 aa).

Aspartate 8 serves as a coordination point for Mg(2+).

This sequence belongs to the CRISPR-associated endoribonuclease Cas2 protein family. Homodimer, forms a heterotetramer with a Cas1 homodimer. Mg(2+) serves as cofactor.

Functionally, CRISPR (clustered regularly interspaced short palindromic repeat), is an adaptive immune system that provides protection against mobile genetic elements (viruses, transposable elements and conjugative plasmids). CRISPR clusters contain sequences complementary to antecedent mobile elements and target invading nucleic acids. CRISPR clusters are transcribed and processed into CRISPR RNA (crRNA). Functions as a ssRNA-specific endoribonuclease. Involved in the integration of spacer DNA into the CRISPR cassette. This chain is CRISPR-associated endoribonuclease Cas2, found in Thermofilum pendens (strain DSM 2475 / Hrk 5).